A 157-amino-acid polypeptide reads, in one-letter code: Transcriptional repressor NrdR (157 aa).

A disordered region spans residues 1–26; that stretch reads MRCPKCGGSKSSVIDSRQAEDGNTIR. Residues 3-34 fold into a zinc finger; that stretch reads CPKCGGSKSSVIDSRQAEDGNTIRRRRECEDC. Positions 17–26 are enriched in basic and acidic residues; that stretch reads RQAEDGNTIR. Residues 49–139 enclose the ATP-cone domain; it reads LVVVKKDGTR…VYRSFKDVGE (91 aa).

Belongs to the NrdR family. It depends on Zn(2+) as a cofactor.

In terms of biological role, negatively regulates transcription of bacterial ribonucleotide reductase nrd genes and operons by binding to NrdR-boxes. This chain is Transcriptional repressor NrdR, found in Streptococcus gordonii (strain Challis / ATCC 35105 / BCRC 15272 / CH1 / DL1 / V288).